A 103-amino-acid polypeptide reads, in one-letter code: Phosphoribosyl-ATP pyrophosphatase (103 aa).

Belongs to the PRA-PH family.

It is found in the cytoplasm. The catalysed reaction is 1-(5-phospho-beta-D-ribosyl)-ATP + H2O = 1-(5-phospho-beta-D-ribosyl)-5'-AMP + diphosphate + H(+). Its pathway is amino-acid biosynthesis; L-histidine biosynthesis; L-histidine from 5-phospho-alpha-D-ribose 1-diphosphate: step 2/9. This chain is Phosphoribosyl-ATP pyrophosphatase, found in Listeria monocytogenes serotype 4a (strain HCC23).